A 247-amino-acid polypeptide reads, in one-letter code: Carboxy-S-adenosyl-L-methionine synthase (247 aa).

S-adenosyl-L-methionine contacts are provided by residues Y40, 65-67 (GAS), 90-91 (DN), 122-123 (DI), N137, and R204.

Belongs to the class I-like SAM-binding methyltransferase superfamily. Cx-SAM synthase family. As to quaternary structure, homodimer.

The enzyme catalyses prephenate + S-adenosyl-L-methionine = carboxy-S-adenosyl-L-methionine + 3-phenylpyruvate + H2O. Catalyzes the conversion of S-adenosyl-L-methionine (SAM) to carboxy-S-adenosyl-L-methionine (Cx-SAM). This is Carboxy-S-adenosyl-L-methionine synthase from Pseudomonas putida (strain W619).